The chain runs to 219 residues: Cytidylate kinase (219 aa).

Residue 10 to 18 (GPAAAGKST) participates in ATP binding.

Belongs to the cytidylate kinase family. Type 1 subfamily.

It localises to the cytoplasm. It catalyses the reaction CMP + ATP = CDP + ADP. It carries out the reaction dCMP + ATP = dCDP + ADP. The chain is Cytidylate kinase from Staphylococcus aureus (strain MRSA252).